Consider the following 439-residue polypeptide: MSKIIGKIGRLPKTLYEHKKKTIFFSFLGYLGADWVYRWDRNQGIRKEYAKIAVKYGETTVSPETRPKRVFVLVNVEGNSRGCFDQFNKNALPLFHLAGVQVDVVKADNQAQLEALAGAVDTQEADILYVVGGDGTIGTVVTGIFRNREKAQLPVGFYPGGYDNLWLKRMLPSVFENSDDVRHACETAMAVIEDQKKSVYAFELTTEGSTLAPEYGLGDVSAGWFRQIEDTRKKFWYFSMAKRRWAYFWEMLKRGPAPIECHVEYEETCAGCEKCRPKPIIEAPQWRWWHVLTGTPKYKNNDGQKDYTGIINEKCGEKHELDTHGAEFLIENEQMSDYSQIRFRMGGTDIGRFGVISDGFKRCSEGIVGRSTDEKFYGTDFLANSVAFKISALPSYIHRLYISSNATPKDAELTDRQITIRGTQKKLDIFLPTSIRLEL.

One can recognise a DAGKc domain in the interval 65–208 (TRPKRVFVLV…VYAFELTTEG (144 aa)).

This is an uncharacterized protein from Caenorhabditis elegans.